Reading from the N-terminus, the 484-residue chain is Poly(A) RNA polymerase GLD2 (484 aa).

A phosphoserine mark is found at serine 62 and serine 69. The Nuclear localization signal motif lies at lysine 76–arginine 92. Position 95 is a phosphoserine (serine 95). Residues aspartate 213 and aspartate 215 each contribute to the Mg(2+) site. A PAP-associated domain is found at serine 386–asparagine 440.

This sequence belongs to the DNA polymerase type-B-like family. GLD2 subfamily. Interacts with CPEB1, CPEB2, CPSF1 and PABPC1. Interacts with QKI isoform QKI7; promoting recruitment to miRNA miR-122 and miR-122 stabilization. It depends on Mg(2+) as a cofactor. Requires Mn(2+) as cofactor.

It is found in the cytoplasm. The protein localises to the nucleus. It carries out the reaction RNA(n) + ATP = RNA(n)-3'-adenine ribonucleotide + diphosphate. Functionally, cytoplasmic poly(A) RNA polymerase that adds successive AMP monomers to the 3'-end of specific RNAs, forming a poly(A) tail. In contrast to the canonical nuclear poly(A) RNA polymerase, it only adds poly(A) to selected cytoplasmic mRNAs. Does not play a role in replication-dependent histone mRNA degradation. Adds a single nucleotide to the 3' end of specific miRNAs, monoadenylation stabilizes and prolongs the activity of some but not all miRNAs. This chain is Poly(A) RNA polymerase GLD2, found in Rattus norvegicus (Rat).